We begin with the raw amino-acid sequence, 369 residues long: tRNA pseudouridine synthase D (369 aa).

Residue Asp80 is the Nucleophile of the active site. The region spanning 156 to 318 is the TRUD domain; sequence GIPNWFGEQR…LKQERRALRL (163 aa).

This sequence belongs to the pseudouridine synthase TruD family.

The catalysed reaction is uridine(13) in tRNA = pseudouridine(13) in tRNA. Responsible for synthesis of pseudouridine from uracil-13 in transfer RNAs. This is tRNA pseudouridine synthase D from Xanthomonas oryzae pv. oryzae (strain KACC10331 / KXO85).